The sequence spans 427 residues: MLDVKLLRNNFDEVKQKLQNRGEDLGEFEKFGELDKRRRTLIVETEALKSQRNEVSQEIAKLKREKQDADAKIEEMRVVGDRIKTLDIELREIDEKLDMILMSIPNIPHESTPVGESEDDNVEIRKWGEVREFDFEPKAHWDLGTDLDILDFENAAKVTGSRFVFYKKLGARLERALINFMMDLHSNEHGYEEMLPPYMVNRASMTGTGQLPKFEEDAFLIEAEDYFLIPTAEVPVTNYHREDILKAEDLPRKYTAFSACFRSEAGSAGRDTRGLIRQHQFNKVELVQFVKPEDSYAALEKLTGNAEEVLRRLELPYRVLSMCTADLGFTAAKKYDLEVWIPSYNSYREISSCSNFESFQARRANIRFRREPGSKPEYVHTLNGSGLALGRTVAAILENYQDADGSVRIPKVLQGYMGGIEKIELPK.

231-233 (TAE) is an L-serine binding site. 262–264 (RSE) lines the ATP pocket. Residue Glu285 coordinates L-serine. 349–352 (EISS) lines the ATP pocket. Ser385 is an L-serine binding site.

This sequence belongs to the class-II aminoacyl-tRNA synthetase family. Type-1 seryl-tRNA synthetase subfamily. As to quaternary structure, homodimer. The tRNA molecule binds across the dimer.

The protein localises to the cytoplasm. It catalyses the reaction tRNA(Ser) + L-serine + ATP = L-seryl-tRNA(Ser) + AMP + diphosphate + H(+). It carries out the reaction tRNA(Sec) + L-serine + ATP = L-seryl-tRNA(Sec) + AMP + diphosphate + H(+). Its pathway is aminoacyl-tRNA biosynthesis; selenocysteinyl-tRNA(Sec) biosynthesis; L-seryl-tRNA(Sec) from L-serine and tRNA(Sec): step 1/1. Functionally, catalyzes the attachment of serine to tRNA(Ser). Is also able to aminoacylate tRNA(Sec) with serine, to form the misacylated tRNA L-seryl-tRNA(Sec), which will be further converted into selenocysteinyl-tRNA(Sec). In Listeria monocytogenes serotype 4b (strain CLIP80459), this protein is Serine--tRNA ligase.